The sequence spans 221 residues: Max dimerization protein 1 (221 aa).

Positions 21-49 (RREREAEHGYASMLPYNNKDRDALKRRNK) match the Nuclear localization signal motif. Disordered stretches follow at residues 30–68 (YASM…EKNR) and 173–204 (TGDL…YSST). Positions 56-108 (SSRSTHNEMEKNRRAHLRLCLEKLKGLVPLGPESSRHTTLSLLTKAKLHIKKL) constitute a bHLH domain. A compositionally biased stretch (low complexity) spans 175 to 184 (DLDWSSSSVS). The span at 191 to 204 (SMQSLGSDEGYSST) shows a compositional bias: polar residues.

In terms of assembly, heterodimer with MAX; the interaction is required for DNA-binding. DNA binding requires dimerization with another bHLH protein; does not form homodimers, and does not bind to DNA in the absence of MAX in vitro. Interacts with RNF17. In terms of processing, ubiquitinated by BIRC2/c-IAP1, leading to its subsequent degradation by the proteasome.

Its subcellular location is the nucleus. In terms of biological role, component of a transcriptional repressor complex together with MAX. In complex with MAX binds to the core DNA sequence 5'-CAC[GA]TG-3'. Antagonizes MYC transcriptional activity by competing with MYC for MAX binding. Binds to the TERT promoter and represses telomerase expression, possibly by interfering with MYC binding. The sequence is that of Max dimerization protein 1 (MXD1) from Homo sapiens (Human).